The sequence spans 46 residues: Viscotoxin-A2 (46 aa).

Disulfide bonds link Cys-3–Cys-40, Cys-4–Cys-32, and Cys-16–Cys-26.

This sequence belongs to the plant thionin (TC 1.C.44) family.

The protein localises to the secreted. Its function is as follows. Thionins are small plant proteins which are toxic to animal cells. They seem to exert their toxic effect at the level of the cell membrane. Their precise function is not known. This is Viscotoxin-A2 (THI2.3) from Viscum album (European mistletoe).